The sequence spans 199 residues: NAD(P)H dehydrogenase (quinone) (199 aa).

One can recognise a Flavodoxin-like domain in the interval 4-190 (VLVLYYSAYG…AGARYQGKTI (187 aa)). Residues 10 to 15 (SAYGHI) and 78 to 80 (TRF) each bind FMN. Tyr12 serves as a coordination point for NAD(+). Trp98 is a binding site for substrate. FMN contacts are provided by residues 113 to 119 (STATQHG) and His134.

It belongs to the WrbA family. FMN serves as cofactor.

The enzyme catalyses a quinone + NADH + H(+) = a quinol + NAD(+). It carries out the reaction a quinone + NADPH + H(+) = a quinol + NADP(+). The protein is NAD(P)H dehydrogenase (quinone) of Rhodopseudomonas palustris (strain TIE-1).